Reading from the N-terminus, the 102-residue chain is Membrane-bound protein LytA (102 aa).

The signal sequence occupies residues 1-16; that stretch reads MKKFIALLFFILLLSG. The N-palmitoyl cysteine moiety is linked to residue Cys17. Cys17 is lipidated: S-diacylglycerol cysteine.

The protein resides in the cell membrane. Its function is as follows. Possible role in the secretion of LytB and LytC. The sequence is that of Membrane-bound protein LytA (lytA) from Bacillus subtilis (strain 168).